The sequence spans 335 residues: Trans-1,2-dihydrobenzene-1,2-diol dehydrogenase (335 aa).

Belongs to the Gfo/Idh/MocA family. Homodimer. In terms of tissue distribution, liver, lens, spleen, kidney and small intestine.

The catalysed reaction is (1R,2R)-1,2-dihydrobenzene-1,2-diol + NADP(+) = catechol + NADPH + H(+). It catalyses the reaction D-xylose + NADP(+) = D-xylono-1,5-lactone + NADPH + H(+). Strongly inhibited by isoascorbic acid, 4-hydroxyacetophenone and chloromercuriphenylsulphonate. Stimulated by various salts. The protein is Trans-1,2-dihydrobenzene-1,2-diol dehydrogenase (DHDH) of Sus scrofa (Pig).